We begin with the raw amino-acid sequence, 275 residues long: Formamidopyrimidine-DNA glycosylase (275 aa).

The Schiff-base intermediate with DNA role is filled by P2. Catalysis depends on E3, which acts as the Proton donor. The active-site Proton donor; for beta-elimination activity is K58. Residues H91 and R110 each contribute to the DNA site. The FPG-type zinc finger occupies 238-272; it reads QVYGQTGKPCPRCGQAIVKLKVGGRGTHICPKCQK. R262 serves as the catalytic Proton donor; for delta-elimination activity.

The protein belongs to the FPG family. In terms of assembly, monomer. Zn(2+) serves as cofactor.

The enzyme catalyses Hydrolysis of DNA containing ring-opened 7-methylguanine residues, releasing 2,6-diamino-4-hydroxy-5-(N-methyl)formamidopyrimidine.. It catalyses the reaction 2'-deoxyribonucleotide-(2'-deoxyribose 5'-phosphate)-2'-deoxyribonucleotide-DNA = a 3'-end 2'-deoxyribonucleotide-(2,3-dehydro-2,3-deoxyribose 5'-phosphate)-DNA + a 5'-end 5'-phospho-2'-deoxyribonucleoside-DNA + H(+). Involved in base excision repair of DNA damaged by oxidation or by mutagenic agents. Acts as a DNA glycosylase that recognizes and removes damaged bases. Has a preference for oxidized purines, such as 7,8-dihydro-8-oxoguanine (8-oxoG). Has AP (apurinic/apyrimidinic) lyase activity and introduces nicks in the DNA strand. Cleaves the DNA backbone by beta-delta elimination to generate a single-strand break at the site of the removed base with both 3'- and 5'-phosphates. This chain is Formamidopyrimidine-DNA glycosylase, found in Streptococcus pyogenes serotype M6 (strain ATCC BAA-946 / MGAS10394).